The following is a 164-amino-acid chain: Phosphopantetheine adenylyltransferase (164 aa).

Ser10 serves as a coordination point for substrate. Residues 10–11 (SF) and His18 contribute to the ATP site. Substrate is bound by residues Lys42, Thr79, and Arg93. Residues 94–96 (GLR), Glu104, and 129–135 (VRPITAS) each bind ATP.

This sequence belongs to the bacterial CoaD family. As to quaternary structure, homohexamer. The cofactor is Mg(2+).

The protein localises to the cytoplasm. The enzyme catalyses (R)-4'-phosphopantetheine + ATP + H(+) = 3'-dephospho-CoA + diphosphate. The protein operates within cofactor biosynthesis; coenzyme A biosynthesis; CoA from (R)-pantothenate: step 4/5. Its function is as follows. Reversibly transfers an adenylyl group from ATP to 4'-phosphopantetheine, yielding dephospho-CoA (dPCoA) and pyrophosphate. The chain is Phosphopantetheine adenylyltransferase from Bradyrhizobium sp. (strain ORS 278).